A 271-amino-acid chain; its full sequence is Tryptophan synthase alpha chain (271 aa).

Residues Glu49 and Asp60 each act as proton acceptor in the active site.

This sequence belongs to the TrpA family. In terms of assembly, tetramer of two alpha and two beta chains.

It carries out the reaction (1S,2R)-1-C-(indol-3-yl)glycerol 3-phosphate + L-serine = D-glyceraldehyde 3-phosphate + L-tryptophan + H2O. Its pathway is amino-acid biosynthesis; L-tryptophan biosynthesis; L-tryptophan from chorismate: step 5/5. Functionally, the alpha subunit is responsible for the aldol cleavage of indoleglycerol phosphate to indole and glyceraldehyde 3-phosphate. This chain is Tryptophan synthase alpha chain, found in Buchnera aphidicola subsp. Schizaphis graminum (strain Sg).